The chain runs to 64 residues: Large ribosomal subunit protein uL29 (64 aa).

Belongs to the universal ribosomal protein uL29 family.

The sequence is that of Large ribosomal subunit protein uL29 from Nitrosomonas europaea (strain ATCC 19718 / CIP 103999 / KCTC 2705 / NBRC 14298).